A 268-amino-acid chain; its full sequence is Small ribosomal subunit protein eS1 (268 aa).

Disordered regions lie at residues 1–21 (MAVG…KKKV) and 238–268 (GGGK…QEAV).

The protein belongs to the eukaryotic ribosomal protein eS1 family. In terms of assembly, component of the small ribosomal subunit. Mature ribosomes consist of a small (40S) and a large (60S) subunit. The 40S subunit contains about 33 different proteins and 1 molecule of RNA (18S). The 60S subunit contains about 49 different proteins and 3 molecules of RNA (28S, 5.8S and 5S).

It is found in the cytoplasm. In terms of biological role, essential for oogenesis; required for late follicle cell development. This is Small ribosomal subunit protein eS1 from Drosophila ananassae (Fruit fly).